The chain runs to 38 residues: Kunitz-type trypsin inhibitor beta chain (38 aa).

This sequence belongs to the protease inhibitor I3 (leguminous Kunitz-type inhibitor) family. As to quaternary structure, heterodimer of an alpha and a beta chain linked by a disulfide bond.

Functionally, inhibition of trypsin. The polypeptide is Kunitz-type trypsin inhibitor beta chain (Neltuma juliflora (Mesquite)).